A 1017-amino-acid polypeptide reads, in one-letter code: Probable isoleucine--tRNA ligase, cytoplasmic (1017 aa).

Residues 45 to 55 (PFATGLPHYGH) carry the 'HIGH' region motif. The 'KMSKS' region motif lies at 609-613 (KMSKR). K612 serves as a coordination point for ATP.

Belongs to the class-I aminoacyl-tRNA synthetase family.

It localises to the cytoplasm. It carries out the reaction tRNA(Ile) + L-isoleucine + ATP = L-isoleucyl-tRNA(Ile) + AMP + diphosphate. In Encephalitozoon cuniculi (strain GB-M1) (Microsporidian parasite), this protein is Probable isoleucine--tRNA ligase, cytoplasmic.